Here is a 349-residue protein sequence, read N- to C-terminus: Core protein VP7 (349 aa).

Asn193 and Asn287 each carry an N-linked (GlcNAc...) asparagine; by host glycan.

Belongs to the orbivirus VP7 family. As to quaternary structure, homotrimer that assemble in a complex of 260 capsomers on an inner scaffold composed of VP3.

It is found in the virion. Its function is as follows. The VP7 protein is one of the five proteins (with VP1, VP3, VP4, and VP6) which form the inner capsid of the virus. In Antilocapra americana (Pronghorn), this protein is Core protein VP7 (Segment-7).